The following is a 258-amino-acid chain: uncharacterized protein (258 aa).

Positions 1 to 19 (MRKIFLPLLLVALSPVAHS) are cleaved as a signal peptide.

This is an uncharacterized protein from Escherichia coli (strain K12).